The following is a 1482-amino-acid chain: Cystic fibrosis transmembrane conductance regulator (1482 aa).

The Cytoplasmic portion of the chain corresponds to 1-77; that stretch reads MQKSPLERAS…KLINALRRCF (77 aa). Residues 78-98 traverse the membrane as a helical segment; sequence FWRFVFYGILLYLGEVTKAVQ. The 285-residue stretch at 81–365 folds into the ABC transmembrane type-1 1 domain; it reads FVFYGILLYL…WAVQTWYDSL (285 aa). Residues 99-122 lie on the Extracellular side of the membrane; that stretch reads PLLLGRIIASYDPDNKVERSIAIY. Residues 123 to 146 form a helical membrane-spanning segment; it reads LAIGLCLLFIVRTLLLHPAIFGLH. The Cytoplasmic segment spans residues 147–195; sequence HMGMQMRIAMFSLIYKKTLKLSSRVLDKISIGQLVSLLSNNLNKFDEGL. Residues 196–216 form a helical membrane-spanning segment; sequence ALAHFVWIAPLQVTLLMGLIW. Over 217–222 the chain is Extracellular; sequence DLLQAS. The chain crosses the membrane as a helical span at residues 223 to 243; it reads AFCGLAFLIIVALGQAGLGRM. The Cytoplasmic portion of the chain corresponds to 244–298; sequence MMKYRDKRAGKINERLVITSEMIENIQSVKAYCWEEAMEKMIENLRQIELRLTRK. A helical membrane pass occupies residues 299-319; sequence AAYVRYFNSAAFFFSGFFVVF. Topologically, residues 320 to 339 are extracellular; sequence LSVLPYAMLKGIILRKIFTT. A helical transmembrane segment spans residues 340-358; the sequence is ISFCIVLRMAVTRQFPWAV. The Cytoplasmic segment spans residues 359-858; sequence QTWYDSLGAI…YLRYVTVHKS (500 aa). Residues Trp-401, Ser-434, 458–465, and Gln-493 contribute to the ATP site; that span reads GSTGAGKT. Positions 423–646 constitute an ABC transporter 1 domain; it reads NGDNSLFFSN…RPDFSSELMG (224 aa). Cys-524 carries S-palmitoyl cysteine lipidation. Phosphoserine is present on residues Ser-549 and Ser-660. The segment at 654–831 is disordered R region; the sequence is SAERRNSILT…EEINEEDLKE (178 aa). Residue Ser-670 is modified to Phosphoserine; by PKA. Ser-685 carries the phosphoserine modification. Residue Lys-687 forms a Glycyl lysine isopeptide (Lys-Gly) (interchain with G-Cter in ubiquitin) linkage. Phosphoserine occurs at positions 699 and 711. At Thr-716 the chain carries Phosphothreonine. Ser-736, Ser-767, Ser-790, Ser-795, and Ser-813 each carry phosphoserine. A helical membrane pass occupies residues 859–879; the sequence is LIFVLIWCLVVFLAEVAVSLV. In terms of domain architecture, ABC transmembrane type-1 2 spans 859-1156; the sequence is LIFVLIWCLV…AVNSSIDVDS (298 aa). Topologically, residues 880-919 are extracellular; that stretch reads VLYLLRTSSLQDKGNNTTVNANSSYGVIVTNTSSYYLLYI. N-linked (GlcNAc...) asparagine glycans are attached at residues Asn-894, Asn-895, Asn-901, and Asn-910. A discontinuously helical transmembrane segment spans residues 920–940; the sequence is YVGIADSLFALAIFRGLPLVH. Residues 941 to 991 are Cytoplasmic-facing; the sequence is TLIKVSKTLHHKMLRSILQAPMSTFNTLKAGRILNRFSKDIAILDDLLPLT. Residues 992–1012 form a helical membrane-spanning segment; it reads MFDFIQLLLIVIGAVVVVSVL. Over 1013 to 1014 the chain is Extracellular; sequence QP. A helical transmembrane segment spans residues 1015–1035; sequence YIFLATVPVIAAFIILRAYFL. Topologically, residues 1036–1096 are cytoplasmic; sequence HTSQQLKQLE…TANWFLYLST (61 aa). Residues 1097-1117 traverse the membrane as a helical segment; it reads LRWFQMRIEIIFVIFFIAVTF. Residues 1118–1131 lie on the Extracellular side of the membrane; sequence VSILTTGEGEGTIG. Residues 1132–1152 form a helical membrane-spanning segment; that stretch reads IILTLAMNIMNTLQWAVNSSI. Over 1153–1482 the chain is Cytoplasmic; sequence DVDSLMRSVS…TEEEVQETRL (330 aa). Positions 1212–1445 constitute an ABC transporter 2 domain; sequence MTVKDLTAKY…KSLFRQAISP (234 aa). ATP contacts are provided by residues Tyr-1221 and 1246 to 1253; that span reads GRTGSGKS. The tract at residues 1388–1482 is interaction with GORASP2; the sequence is RTLKQAFADC…TEEEVQETRL (95 aa). The S-palmitoyl cysteine moiety is linked to residue Cys-1397. The span at 1454 to 1463 shows a compositional bias: basic residues; sequence HRNSSRHRSR. The disordered stretch occupies residues 1454 to 1482; it reads HRNSSRHRSRSQIAALKEETEEEVQETRL. Position 1458 is a phosphoserine (Ser-1458). Over residues 1472 to 1482 the composition is skewed to acidic residues; it reads ETEEEVQETRL. A PDZ-binding motif is present at residues 1480 to 1482; sequence TRL.

The protein belongs to the ABC transporter superfamily. ABCC family. CFTR transporter (TC 3.A.1.202) subfamily. Monomer; does not require oligomerization for channel activity. May form oligomers in the membrane. Interacts with SLC26A3, SLC26A6 and NHERF1. Interacts with SHANK2. Interacts with MYO6. Interacts (via C-terminus) with GOPC (via PDZ domain); this promotes CFTR internalization and thereby decreases channel activity. Interacts with SLC4A7 through NHERF1. Found in a complex with MYO5B and RAB11A. Interacts with ANO1. Interacts with SLC26A8. Interacts with AHCYL1; the interaction increases CFTR activity. Interacts with CSE1L. The core-glycosylated form interacts with GORASP2 (via PDZ GRASP-type 1 domain) in respone to ER stress. Interacts with MARCHF2; the interaction leads to CFTR ubiqtuitination and degradation. Interacts with ADGRG2. N-glycosylated. Post-translationally, phosphorylated; cAMP treatment promotes phosphorylation and activates the channel. Dephosphorylation decreases the ATPase activity (in vitro). Phosphorylation at PKA sites activates the channel. Phosphorylation at PKC sites enhances the response to phosphorylation by PKA. Phosphorylated by AMPK; this inhibits channel activity. In terms of processing, ubiquitinated, leading to its degradation in the lysosome. Deubiquitination by USP10 in early endosomes enhances its endocytic recycling to the cell membrane. Ubiquitinated by RNF185 during ER stress. Ubiquitinated by MARCHF2.

The protein resides in the apical cell membrane. Its subcellular location is the early endosome membrane. The protein localises to the cell membrane. It is found in the recycling endosome membrane. It localises to the endoplasmic reticulum membrane. The protein resides in the nucleus. The catalysed reaction is ATP + H2O + closed Cl(-) channel = ADP + phosphate + open Cl(-) channel.. The enzyme catalyses chloride(in) = chloride(out). It carries out the reaction hydrogencarbonate(in) = hydrogencarbonate(out). It catalyses the reaction ATP + H2O = ADP + phosphate + H(+). Functionally, epithelial ion channel that plays an important role in the regulation of epithelial ion and water transport and fluid homeostasis. Mediates the transport of chloride ions across the cell membrane. Possesses an intrinsic ATPase activity and utilizes ATP to gate its channel; the passive flow of anions through the channel is gated by cycles of ATP binding and hydrolysis by the ATP-binding domains. The ion channel is also permeable to HCO(3)(-); selectivity depends on the extracellular chloride concentration. Exerts its function also by modulating the activity of other ion channels and transporters. Contributes to the regulation of the pH and the ion content of the epithelial fluid layer. Modulates the activity of the epithelial sodium channel (ENaC) complex, in part by regulating the cell surface expression of the ENaC complex. May regulate bicarbonate secretion and salvage in epithelial cells by regulating the transporter SLC4A7. Can inhibit the chloride channel activity of ANO1. Plays a role in the chloride and bicarbonate homeostasis during sperm epididymal maturation and capacitation. In Loxodonta africana (African elephant), this protein is Cystic fibrosis transmembrane conductance regulator.